The chain runs to 495 residues: Cobyric acid synthase (495 aa).

Residues 250–444 form the GATase cobBQ-type domain; that stretch reads SLKISILRLP…LHGLFDNGAW (195 aa). The active-site Nucleophile is Cys331. His436 is an active-site residue.

It belongs to the CobB/CobQ family. CobQ subfamily.

Its pathway is cofactor biosynthesis; adenosylcobalamin biosynthesis. Its function is as follows. Catalyzes amidations at positions B, D, E, and G on adenosylcobyrinic A,C-diamide. NH(2) groups are provided by glutamine, and one molecule of ATP is hydrogenolyzed for each amidation. This Rippkaea orientalis (strain PCC 8801 / RF-1) (Cyanothece sp. (strain PCC 8801)) protein is Cobyric acid synthase.